We begin with the raw amino-acid sequence, 258 residues long: Type III pantothenate kinase (258 aa).

ATP is bound at residue 6 to 13; sequence DAGNTRIK. Residues Y98 and 105 to 108 each bind substrate; that span reads GSDR. The active-site Proton acceptor is D107. Residue T131 participates in ATP binding. Substrate is bound at residue T184.

Belongs to the type III pantothenate kinase family. In terms of assembly, homodimer. Requires NH4(+) as cofactor. K(+) serves as cofactor.

The protein localises to the cytoplasm. The enzyme catalyses (R)-pantothenate + ATP = (R)-4'-phosphopantothenate + ADP + H(+). It participates in cofactor biosynthesis; coenzyme A biosynthesis; CoA from (R)-pantothenate: step 1/5. In terms of biological role, catalyzes the phosphorylation of pantothenate (Pan), the first step in CoA biosynthesis. This Herminiimonas arsenicoxydans protein is Type III pantothenate kinase.